A 1034-amino-acid polypeptide reads, in one-letter code: Integrin alpha-V (1034 aa).

The signal sequence occupies residues 1 to 19 (MAALRASLLLSCALTAARA). Residues 20–978 (FNLDAERPAV…WGIQPQPMPV (959 aa)) are Extracellular-facing. 7 FG-GAP repeats span residues 21 to 86 (NLDA…RNCQ), 97 to 158 (DFAP…VEYA), 161 to 213 (RSTT…LAKY), 225 to 279 (QLAT…GKNM), 280 to 345 (SSMY…GGFQ), 346 to 403 (IAKL…GLNA), and 407 to 470 (RILE…VNPT). N-linked (GlcNAc...) asparagine glycosylation occurs at Asn-62. 3 disulfides stabilise this stretch: Cys-77–Cys-85, Cys-126–Cys-146, and Cys-160–Cys-173. The Ca(2+) site is built by Asp-248, Asp-252, Ile-254, and Asp-256. Residues Asn-278 and Asn-284 are each glycosylated (N-linked (GlcNAc...) asparagine). Ca(2+) contacts are provided by Asp-302, Asn-304, Asp-306, Tyr-308, Asp-310, Asp-367, Asp-369, Asp-371, Phe-373, Asp-375, Asp-431, Asp-433, Asn-435, Tyr-437, and Asp-439. Intrachain disulfides connect Cys-479-Cys-488 and Cys-494-Cys-551. Residues Asn-540 and Asn-601 are each glycosylated (N-linked (GlcNAc...) asparagine). 2 disulfides stabilise this stretch: Cys-612–Cys-618 and Cys-684–Cys-697. Residues Asn-690, Asn-821, Asn-837, and Asn-860 are each glycosylated (N-linked (GlcNAc...) asparagine). Disulfide bonds link Cys-838–Cys-900 and Cys-890–Cys-895. Residues Asn-931, Asn-951, Asn-959, and Asn-966 are each glycosylated (N-linked (GlcNAc...) asparagine). Residues 979 to 1002 (PVWVIILAVLAGLLLLAVLVLVMY) form a helical membrane-spanning segment. The Cytoplasmic segment spans residues 1003 to 1034 (RMGFFKRVRPPQEEQEREQLQPHENGEGTSEA). The GFFKR motif motif lies at 1005-1009 (GFFKR). Positions 1013-1028 (PQEEQEREQLQPHENG) are enriched in basic and acidic residues. The tract at residues 1013–1034 (PQEEQEREQLQPHENGEGTSEA) is disordered.

This sequence belongs to the integrin alpha chain family. As to quaternary structure, heterodimer of an alpha and a beta subunit. The alpha subunit is composed of a heavy and a light chain linked by a disulfide bond. Alpha-V (ITGAV) associates with either beta-1 (ITGB1), beta-3 (ITGB3), beta-5 (ITGB5), beta-6 (ITGB6) or beta-8 (ITGB8). Interacts with RAB25. Interacts with CIB1. Integrins ITGAV:ITGB3 and ITGAV:ITGB5 interact with FBLN5 (via N-terminus). ITGAV:ITGB3 and ITGAV:ITGB5 interact with CCN3. ITGAV:ITGB3 interacts with ADGRA2. ITGAV:ITGB3 interacts with FGF2; it is likely that FGF2 can simultaneously bind ITGAV:ITGB3 and FGF receptors. ITGAV:ITGB3 is found in a ternary complex with CX3CR1 and CX3CL1. ITGAV:ITGB3 is found in a ternary complex with NRG1 and ERBB3. ITGAV:ITGB3 is found in a ternary complex with FGF1 and FGFR1. ITGAV:ITGB3 is found in a ternary complex with IGF1 and IGF1R. ITGAV:ITGB3 interacts with IGF2. ITGAV:ITGB3 and ITGAV:ITGB6 interact with FBN1. ITGAV:ITGB3 interacts with CD9, CD81 and CD151 (via second extracellular domain). ITGAV:ITGB6 interacts with TGFB1.

The protein resides in the membrane. Its subcellular location is the cell junction. It localises to the focal adhesion. Functionally, the alpha-V (ITGAV) integrins are receptors for vitronectin, cytotactin, fibronectin, fibrinogen, laminin, matrix metalloproteinase-2, osteopontin, osteomodulin, prothrombin, thrombospondin, TGFB1 and vWF. They recognize the sequence R-G-D in a wide array of ligands. Alpha-V integrins may play a role in embryo implantation, angiogenesis and wound healing. ITGAV:ITGB3 binds to fractalkine (CX3CL1) and may act as its coreceptor in CX3CR1-dependent fractalkine signaling. ITGAV:ITGB3 binds to NRG1 (via EGF domain) and this binding is essential for NRG1-ERBB signaling. ITGAV:ITGB3 binds to FGF1 and this binding is essential for FGF1 signaling. ITGAV:ITGB3 binds to FGF2 and this binding is essential for FGF2 signaling. ITGAV:ITGB3 binds to IGF1 and this binding is essential for IGF1 signaling. ITGAV:ITGB3 binds to IGF2 and this binding is essential for IGF2 signaling. ITGAV:ITGB3 binds to IL1B and this binding is essential for IL1B signaling. ITGAV:ITGB3 binds to PLA2G2A via a site (site 2) which is distinct from the classical ligand-binding site (site 1) and this induces integrin conformational changes and enhanced ligand binding to site 1. ITGAV:ITGB3 and ITGAV:ITGB6 act as receptors for fibrillin-1 (FBN1) and mediate R-G-D-dependent cell adhesion to FBN1. Integrin alpha-V/beta-6 or alpha-V/beta-8 (ITGAV:ITGB6 or ITGAV:ITGB8) mediates R-G-D-dependent release of transforming growth factor beta-1 (TGF-beta-1) from regulatory Latency-associated peptide (LAP), thereby playing a key role in TGF-beta-1 activation. ITGAV:ITGB3 acts as a receptor for CD40LG. ITGAV:ITGB3 acts as a receptor for IBSP and promotes cell adhesion and migration to IBSP. This is Integrin alpha-V (ITGAV) from Gallus gallus (Chicken).